The sequence spans 205 residues: ITG-like peptide (205 aa).

The first 15 residues, M1–T15, serve as a signal peptide directing secretion. Propeptides lie at residues A16–E188 and M202–A205.

As to expression, expressed throughout the nervous system (at protein level).

The protein resides in the secreted. This chain is ITG-like peptide, found in Camponotus floridanus (Florida carpenter ant).